The chain runs to 565 residues: NAD-dependent malic enzyme (565 aa).

Tyr104 functions as the Proton donor in the catalytic mechanism. Arg157 contacts NAD(+). Lys175 acts as the Proton acceptor in catalysis. Glu246, Asp247, and Asp270 together coordinate a divalent metal cation. Residues Asp270 and Asn418 each contribute to the NAD(+) site.

It belongs to the malic enzymes family. In terms of assembly, homotetramer. Mg(2+) is required as a cofactor. The cofactor is Mn(2+).

The enzyme catalyses (S)-malate + NAD(+) = pyruvate + CO2 + NADH. It carries out the reaction oxaloacetate + H(+) = pyruvate + CO2. The sequence is that of NAD-dependent malic enzyme from Pectobacterium carotovorum subsp. carotovorum (strain PC1).